The primary structure comprises 169 residues: Cytochrome c oxidase subunit 4 isoform 1, mitochondrial (169 aa).

The transit peptide at 1–22 (MLATRVFSLVGKRAISTSVCVR) directs the protein to the mitochondrion. The Mitochondrial matrix segment spans residues 23–98 (AHESVVKSED…SFAEMNRGSN (76 aa)). Position 29 is an N6-acetyllysine; alternate (Lys-29). Lys-29 carries the post-translational modification N6-succinyllysine; alternate. N6-acetyllysine is present on Lys-53. A phosphoserine mark is found at Ser-56 and Ser-58. At Lys-60 the chain carries N6-acetyllysine; alternate. Lys-60 carries the post-translational modification N6-succinyllysine; alternate. Residue Lys-67 is modified to N6-acetyllysine. A helical transmembrane segment spans residues 99 to 124 (EWKTVVGGAMFFIGFTALVIMWQKHY). The Mitochondrial intermembrane portion of the chain corresponds to 125–169 (VYGPLPQSFDKEWVAKQTKRMLDMKVNPIQGLASKWDYEKNEWKK).

The protein belongs to the cytochrome c oxidase IV family. Component of the cytochrome c oxidase (complex IV, CIV), a multisubunit enzyme composed of 14 subunits. The complex is composed of a catalytic core of 3 subunits MT-CO1, MT-CO2 and MT-CO3, encoded in the mitochondrial DNA, and 11 supernumerary subunits COX4I1 (or COX4I2), COX5A, COX5B, COX6A1 (or COX6A2), COX6B1 (or COX6B2), COX6C, COX7A2 (or COX7A1), COX7B, COX7C, COX8A and NDUFA4, which are encoded in the nuclear genome. The complex exists as a monomer or a dimer and forms supercomplexes (SCs) in the inner mitochondrial membrane with NADH-ubiquinone oxidoreductase (complex I, CI) and ubiquinol-cytochrome c oxidoreductase (cytochrome b-c1 complex, complex III, CIII), resulting in different assemblies (supercomplex SCI(1)III(2)IV(1) and megacomplex MCI(2)III(2)IV(2)). Interacts with AFG1L. Interacts with PHB2; the interaction decreases in absence of SPHK2. Interacts with ABCB7; this interaction allows the regulation of cellular iron homeostasis and cellular reactive oxygen species (ROS) levels in cardiomyocytes. Interacts with FLVCR2; this interaction occurs in the absence of heme and is disrupted upon heme binding. Interacts with IRGC. Ubiquitous.

The protein localises to the mitochondrion inner membrane. The protein operates within energy metabolism; oxidative phosphorylation. Functionally, component of the cytochrome c oxidase, the last enzyme in the mitochondrial electron transport chain which drives oxidative phosphorylation. The respiratory chain contains 3 multisubunit complexes succinate dehydrogenase (complex II, CII), ubiquinol-cytochrome c oxidoreductase (cytochrome b-c1 complex, complex III, CIII) and cytochrome c oxidase (complex IV, CIV), that cooperate to transfer electrons derived from NADH and succinate to molecular oxygen, creating an electrochemical gradient over the inner membrane that drives transmembrane transport and the ATP synthase. Cytochrome c oxidase is the component of the respiratory chain that catalyzes the reduction of oxygen to water. Electrons originating from reduced cytochrome c in the intermembrane space (IMS) are transferred via the dinuclear copper A center (CU(A)) of subunit 2 and heme A of subunit 1 to the active site in subunit 1, a binuclear center (BNC) formed by heme A3 and copper B (CU(B)). The BNC reduces molecular oxygen to 2 water molecules using 4 electrons from cytochrome c in the IMS and 4 protons from the mitochondrial matrix. This Homo sapiens (Human) protein is Cytochrome c oxidase subunit 4 isoform 1, mitochondrial.